The following is a 726-amino-acid chain: Catalase-peroxidase (726 aa).

The interval 1-33 (MSTTDDTHNTLSTGKCPFHQGGHDRSAGAGTAS) is disordered. Positions 105 to 226 (WHGAGTYRSI…LGATEMGLIY (122 aa)) form a cross-link, tryptophyl-tyrosyl-methioninium (Trp-Tyr) (with M-252). His106 functions as the Proton acceptor in the catalytic mechanism. Residues 226-252 (YVNPEGPDHSGEPLSAAAAIRATFGNM) constitute a cross-link (tryptophyl-tyrosyl-methioninium (Tyr-Met) (with W-105)). His267 contacts heme b.

The protein belongs to the peroxidase family. Peroxidase/catalase subfamily. Homodimer or homotetramer. The cofactor is heme b. Formation of the three residue Trp-Tyr-Met cross-link is important for the catalase, but not the peroxidase activity of the enzyme.

The catalysed reaction is H2O2 + AH2 = A + 2 H2O. The enzyme catalyses 2 H2O2 = O2 + 2 H2O. In terms of biological role, bifunctional enzyme with both catalase and broad-spectrum peroxidase activity. The chain is Catalase-peroxidase from Salmonella paratyphi A (strain ATCC 9150 / SARB42).